Consider the following 383-residue polypeptide: Glutamyl-tRNA reductase (383 aa).

Substrate contacts are provided by residues 38–41 (TCNR), Ser-82, 87–89 (EDQ), and Gln-93. Cys-39 (nucleophile) is an active-site residue. An NADP(+)-binding site is contributed by 161–166 (GAGEIA).

This sequence belongs to the glutamyl-tRNA reductase family. As to quaternary structure, homodimer.

The catalysed reaction is (S)-4-amino-5-oxopentanoate + tRNA(Glu) + NADP(+) = L-glutamyl-tRNA(Glu) + NADPH + H(+). It functions in the pathway porphyrin-containing compound metabolism; protoporphyrin-IX biosynthesis; 5-aminolevulinate from L-glutamyl-tRNA(Glu): step 1/2. Its function is as follows. Catalyzes the NADPH-dependent reduction of glutamyl-tRNA(Glu) to glutamate 1-semialdehyde (GSA). This chain is Glutamyl-tRNA reductase, found in Methanococcus aeolicus (strain ATCC BAA-1280 / DSM 17508 / OCM 812 / Nankai-3).